Here is a 403-residue protein sequence, read N- to C-terminus: Rhomboid-like protein 15 (403 aa).

The next 5 helical transmembrane spans lie at 22-42 (IPFL…ICLL), 70-90 (AIIF…LVPM), 103-123 (LLYL…LIAS), 141-161 (AIGF…LSGV), and 176-196 (LYPW…SLLG). Serine 145 serves as the catalytic Nucleophile. Histidine 197 serves as the catalytic Charge relay system. Residues 198–218 (LCGILSGFSYSYGLFNFLMPG) form a helical membrane-spanning segment. The disordered stretch occupies residues 282-316 (EASNQSSEDSRFPGRGRTLSTARDPTAPAGETDPN). A UBA domain is found at 361–401 (AASEEQIQKLVAMGFDRTQVEVALAAADDDLTVAVEILMSQ).

This sequence belongs to the peptidase S54 family.

It localises to the membrane. Functionally, probable rhomboid-type serine protease that catalyzes intramembrane proteolysis. May function in senescence. The protein is Rhomboid-like protein 15 of Arabidopsis thaliana (Mouse-ear cress).